The primary structure comprises 230 residues: Sugar fermentation stimulation protein homolog (230 aa).

It belongs to the SfsA family.

In Pelobacter propionicus (strain DSM 2379 / NBRC 103807 / OttBd1), this protein is Sugar fermentation stimulation protein homolog.